The chain runs to 837 residues: Phosphatidylinositol-glycan-specific phospholipase D (837 aa).

The N-terminal stretch at 1-23 (MSAGRLWSSLLLLLPLFCSKSSS) is a signal peptide. 5 N-linked (GlcNAc...) asparagine glycosylation sites follow: Asn-94, Asn-267, Asn-287, Asn-303, and Asn-317. FG-GAP repeat units follow at residues 364–425 (SPSA…GLPP), 431–492 (NKEG…GRLS), 494–554 (SPNV…RNDK), 561–619 (EADW…SLGK), 629–689 (QSTI…GATR), 701–767 (ALLS…TLGD), and 785–837 (QYVL…FSSD). 5 N-linked (GlcNAc...) asparagine glycosylation sites follow: Asn-477, Asn-496, Asn-586, Asn-599, and Asn-655.

Belongs to the GPLD1 family. As to quaternary structure, monomer. As to expression, widely expressed.

It localises to the secreted. It carries out the reaction a 6-(alpha-D-glucosaminyl)-1-(1,2-diacyl-sn-glycero-3-phospho)-1D-myo-inositol + H2O = 6-(alpha-D-glucosaminyl)-1D-myo-inositol + a 1,2-diacyl-sn-glycero-3-phosphate + H(+). In terms of biological role, this protein hydrolyzes the inositol phosphate linkage in proteins anchored by phosphatidylinositol glycans (GPI-anchor) thus releasing these proteins from the membrane. In Mus musculus (Mouse), this protein is Phosphatidylinositol-glycan-specific phospholipase D (Gpld1).